Here is a 347-residue protein sequence, read N- to C-terminus: Ribosomal RNA small subunit methyltransferase C (347 aa).

The protein belongs to the methyltransferase superfamily. RsmC family. Monomer.

It localises to the cytoplasm. It carries out the reaction guanosine(1207) in 16S rRNA + S-adenosyl-L-methionine = N(2)-methylguanosine(1207) in 16S rRNA + S-adenosyl-L-homocysteine + H(+). In terms of biological role, specifically methylates the guanine in position 1207 of 16S rRNA in the 30S particle. This is Ribosomal RNA small subunit methyltransferase C from Shewanella baltica (strain OS155 / ATCC BAA-1091).